A 255-amino-acid polypeptide reads, in one-letter code: Hydroxyacylglutathione hydrolase (255 aa).

H56, H58, D60, H61, H114, D133, and H171 together coordinate Zn(2+).

It belongs to the metallo-beta-lactamase superfamily. Glyoxalase II family. Monomer. It depends on Zn(2+) as a cofactor.

It catalyses the reaction an S-(2-hydroxyacyl)glutathione + H2O = a 2-hydroxy carboxylate + glutathione + H(+). The protein operates within secondary metabolite metabolism; methylglyoxal degradation; (R)-lactate from methylglyoxal: step 2/2. In terms of biological role, thiolesterase that catalyzes the hydrolysis of S-D-lactoyl-glutathione to form glutathione and D-lactic acid. This Rhodopseudomonas palustris (strain BisB5) protein is Hydroxyacylglutathione hydrolase.